The sequence spans 407 residues: Phosphoglycerate kinase (407 aa).

Substrate contacts are provided by residues 27-29 (DLN), Arg-43, 66-69 (HLGR), Arg-125, and Arg-165. ATP is bound by residues Lys-215, Gly-303, Glu-334, and 363-366 (GGDS).

Belongs to the phosphoglycerate kinase family. Monomer.

The protein resides in the cytoplasm. The enzyme catalyses (2R)-3-phosphoglycerate + ATP = (2R)-3-phospho-glyceroyl phosphate + ADP. It participates in carbohydrate degradation; glycolysis; pyruvate from D-glyceraldehyde 3-phosphate: step 2/5. The sequence is that of Phosphoglycerate kinase from Mycobacterium sp. (strain JLS).